The chain runs to 959 residues: UPF0182 protein MAE_41360 (959 aa).

9 consecutive transmembrane segments (helical) span residues 13 to 33 (PILL…VVAN), 50 to 70 (LSWQ…FIFT), 99 to 119 (LLGL…MLLY), 156 to 176 (DISS…GLLI), 184 to 204 (IISI…WANF), 239 to 259 (LWLT…YLFS), 276 to 296 (LRHL…HHII), 319 to 339 (VGQF…IWLG), and 362 to 382 (FFPY…GTII).

Belongs to the UPF0182 family.

It is found in the cell membrane. This Microcystis aeruginosa (strain NIES-843 / IAM M-2473) protein is UPF0182 protein MAE_41360.